The following is a 105-amino-acid chain: N(4)-acetylcytidine amidohydrolase (105 aa).

The region spanning 8 to 93 is the ASCH domain; it reads TFFEFLTPLV…ALIQEIYPNI (86 aa). Lys-22 serves as the catalytic Proton acceptor. Thr-25 serves as the catalytic Nucleophile. Catalysis depends on Glu-75, which acts as the Proton donor.

The protein belongs to the N(4)-acetylcytidine amidohydrolase family.

It carries out the reaction N(4)-acetylcytidine + H2O = cytidine + acetate + H(+). The catalysed reaction is N(4)-acetyl-2'-deoxycytidine + H2O = 2'-deoxycytidine + acetate + H(+). It catalyses the reaction N(4)-acetylcytosine + H2O = cytosine + acetate + H(+). Functionally, catalyzes the hydrolysis of N(4)-acetylcytidine (ac4C). The sequence is that of N(4)-acetylcytidine amidohydrolase from Vibrio cholerae serotype O1 (strain ATCC 39315 / El Tor Inaba N16961).